The sequence spans 317 residues: L-lactate dehydrogenase 1 (317 aa).

Residues Val-17, Asp-38, Lys-43, Tyr-69, and 83–84 (GA) each bind NAD(+). Residues Gln-86 and Arg-92 each coordinate substrate. NAD(+) is bound by residues Ser-105, 122–124 (ATN), and Ser-147. 124 to 127 (NPVD) serves as a coordination point for substrate. Position 152-155 (152-155 (DSAR)) interacts with substrate. His-179 functions as the Proton acceptor in the catalytic mechanism. Position 223 is a phosphotyrosine (Tyr-223). Thr-232 provides a ligand contact to substrate.

The protein belongs to the LDH/MDH superfamily. LDH family. Homotetramer.

It is found in the cytoplasm. The enzyme catalyses (S)-lactate + NAD(+) = pyruvate + NADH + H(+). Its pathway is fermentation; pyruvate fermentation to lactate; (S)-lactate from pyruvate: step 1/1. Functionally, catalyzes the conversion of lactate to pyruvate (Potential). Appears to be the primary factor that allows S.aureus growth during nitrosative stress in both aerobically and anaerobically cultured cells. The chain is L-lactate dehydrogenase 1 from Staphylococcus aureus (strain JH1).